Consider the following 268-residue polypeptide: LOB domain-containing protein 13 (268 aa).

The region spanning 51–152 (TPCAACKLLR…SELTTVRTEI (102 aa)) is the LOB domain. A disordered region spans residues 191–268 (LLPPPPPPPP…SSDNNVHYFD (78 aa)). 2 stretches are compositionally biased toward pro residues: residues 192–205 (LPPP…PRPP) and 212–222 (PAPPPTPPVSL). A compositionally biased stretch (low complexity) spans 223–243 (PSPSMVVSSSSSSNSSATNSM). Residues 250 to 268 (STAGYSNSLSSDNNVHYFD) are compositionally biased toward polar residues.

The protein belongs to the LOB domain-containing protein family. As to expression, expressed in shoots and roots and at low levels in flowers, but not in leaves or inflorescence stems.

The protein is LOB domain-containing protein 13 (LBD13) of Arabidopsis thaliana (Mouse-ear cress).